Consider the following 89-residue polypeptide: uncharacterized protein (89 aa).

The helical transmembrane segment at 20–39 (SFAMTTYLNLFVKLLIFLYI) threads the bilayer.

Its subcellular location is the membrane. This is an uncharacterized protein from Escherichia coli (strain K12).